The chain runs to 287 residues: Inositol-1-monophosphatase (287 aa).

4 residues coordinate Mg(2+): E79, D96, L98, and D99. A substrate-binding site is contributed by E79. Residues 98–101 (LDGT), R195, and D224 contribute to the substrate site. Residue D224 coordinates Mg(2+).

This sequence belongs to the inositol monophosphatase superfamily. It depends on Mg(2+) as a cofactor.

The enzyme catalyses a myo-inositol phosphate + H2O = myo-inositol + phosphate. This chain is Inositol-1-monophosphatase (suhB), found in Synechocystis sp. (strain ATCC 27184 / PCC 6803 / Kazusa).